The following is a 360-amino-acid chain: Lipid-A-disaccharide synthase (360 aa).

This sequence belongs to the LpxB family.

The enzyme catalyses a lipid X + a UDP-2-N,3-O-bis[(3R)-3-hydroxyacyl]-alpha-D-glucosamine = a lipid A disaccharide + UDP + H(+). It participates in bacterial outer membrane biogenesis; LPS lipid A biosynthesis. Functionally, condensation of UDP-2,3-diacylglucosamine and 2,3-diacylglucosamine-1-phosphate to form lipid A disaccharide, a precursor of lipid A, a phosphorylated glycolipid that anchors the lipopolysaccharide to the outer membrane of the cell. The sequence is that of Lipid-A-disaccharide synthase from Helicobacter pylori (strain P12).